Here is a 283-residue protein sequence, read N- to C-terminus: MFS-type transporter eupM (283 aa).

7 helical membrane-spanning segments follow: residues 68–88 (LVAWLQVLGAWVLFFNTWGAM), 111–131 (IAWIGSIQTFCLQAMGLVAGP), 136–156 (GGFKILIVTGSVGVVSGYMML), 165–185 (VLLAQGFLIGIAEGCLFTPMI), 196–216 (IGLATGIASSGSSMGGVVYPI), 227–247 (FAWTTRVLGFISLGMLLIPII), and 263–283 (LIDLSVFTDWPFIVFVIATMI).

Belongs to the major facilitator superfamily. Monocarboxylate porter (TC 2.A.1.13) family.

It is found in the membrane. MFS-type transporter; part of the gene cluster that mediates the biosynthesis of eupenifeldin, a bistropolone meroterpenoid that acts as an antitumor agent. The sequence is that of MFS-type transporter eupM from Phoma sp.